We begin with the raw amino-acid sequence, 310 residues long: Bis(hydroxyethyl) terephthalate hydrolase (310 aa).

The tat-type signal signal peptide spans Met1–Ala48. Phe111 contributes to the bis(2-hydroxyethyl) terephthalate binding site. Residue Ser179 is the Nucleophile of the active site. Positions 180 and 204 each coordinate bis(2-hydroxyethyl) terephthalate. Residues Asp225 and His257 each act as charge relay system in the active site. Cys290 and Cys306 are oxidised to a cystine.

It belongs to the AB hydrolase superfamily. In terms of processing, predicted to be exported by the Tat system. The position of the signal peptide cleavage has not been experimentally proven.

It localises to the secreted. It carries out the reaction bis(2-hydroxyethyl) terephthalate + H2O = 4-[(2-hydroxyethoxy)carbonyl]benzoate + ethylene glycol + H(+). Functionally, catalyzes the degradation of bis(hydroxyethyl) terephthalate (BHET), a derived-oligomer of the plastic poly(ethylene terephthalate) (PET), hydrolyzing BHET to mono(2-hydroxyethyl) terephthalate (MHET). Shows no activity against PET. The protein is Bis(hydroxyethyl) terephthalate hydrolase of Streptomyces coelicolor (strain ATCC BAA-471 / A3(2) / M145).